The following is a 201-amino-acid chain: Peptidyl-tRNA hydrolase (201 aa).

Tyr14 serves as a coordination point for tRNA. The active-site Proton acceptor is the His19. Residues Tyr64, Asn66, and Asn112 each coordinate tRNA.

Belongs to the PTH family. In terms of assembly, monomer.

Its subcellular location is the cytoplasm. It catalyses the reaction an N-acyl-L-alpha-aminoacyl-tRNA + H2O = an N-acyl-L-amino acid + a tRNA + H(+). Functionally, hydrolyzes ribosome-free peptidyl-tRNAs (with 1 or more amino acids incorporated), which drop off the ribosome during protein synthesis, or as a result of ribosome stalling. Its function is as follows. Catalyzes the release of premature peptidyl moieties from peptidyl-tRNA molecules trapped in stalled 50S ribosomal subunits, and thus maintains levels of free tRNAs and 50S ribosomes. The sequence is that of Peptidyl-tRNA hydrolase from Afipia carboxidovorans (strain ATCC 49405 / DSM 1227 / KCTC 32145 / OM5) (Oligotropha carboxidovorans).